The following is a 203-amino-acid chain: Putative 3-methyladenine DNA glycosylase (203 aa).

It belongs to the DNA glycosylase MPG family.

In Clostridium tetani (strain Massachusetts / E88), this protein is Putative 3-methyladenine DNA glycosylase.